A 380-amino-acid chain; its full sequence is Putative 12-oxophytodienoate reductase 4 (380 aa).

Residues 36–38 (PLT), Ala-69, and Gln-111 each bind FMN. Position 183-186 (183-186 (HGAH)) interacts with substrate. Tyr-188 (proton donor) is an active-site residue. Arg-235 is a binding site for FMN. A substrate-binding site is contributed by Arg-276. FMN-binding positions include Gly-306 and 327–328 (GR).

The protein belongs to the NADH:flavin oxidoreductase/NADH oxidase family. FMN serves as cofactor.

Its function is as follows. Putative oxophytodienoate reductase that may be involved in the biosynthesis or metabolism of oxylipin signaling molecules. In Oryza sativa subsp. japonica (Rice), this protein is Putative 12-oxophytodienoate reductase 4 (OPR4).